The primary structure comprises 336 residues: IgLON family member 5 (336 aa).

The signal sequence occupies residues 1-30 (MPPPAPGARLRLLAAAALAGLAVISRGLLS). Ig-like C2-type domains lie at 33–122 (LEFN…QPYT), 132–217 (PARI…VNYP), and 218–307 (PTIT…MRLL). N-linked (GlcNAc...) asparagine glycosylation is found at Asn41, Asn49, Asn67, and Asn137. Cys54 and Cys112 are oxidised to a cystine. 2 disulfide bridges follow: Cys154–Cys195 and Cys238–Cys291. The N-linked (GlcNAc...) asparagine glycan is linked to Asn288.

This sequence belongs to the immunoglobulin superfamily. IgLON family.

Its subcellular location is the secreted. The sequence is that of IgLON family member 5 (IGLON5) from Homo sapiens (Human).